The chain runs to 151 residues: uncharacterized protein (151 aa).

The N-terminal stretch at Met-1–Ala-32 is a signal peptide. The helical transmembrane segment at Ala-45–Ala-67 threads the bilayer.

The protein resides in the membrane. This is an uncharacterized protein from Archaeoglobus fulgidus (strain ATCC 49558 / DSM 4304 / JCM 9628 / NBRC 100126 / VC-16).